The chain runs to 653 residues: Biotin biosynthesis bifunctional protein BioWF (653 aa).

Position 278 (R278) interacts with substrate. 365–366 (GY) contributes to the pyridoxal 5'-phosphate binding site. Substrate is bound at residue H390. Residues S436, 461-464 (DDAH), and 492-495 (TASK) each bind pyridoxal 5'-phosphate. K495 carries the N6-(pyridoxal phosphate)lysine modification.

This sequence in the N-terminal section; belongs to the BioW family. In the C-terminal section; belongs to the class-II pyridoxal-phosphate-dependent aminotransferase family. BioF subfamily. In terms of assembly, homodimer. The cofactor is Mg(2+). Pyridoxal 5'-phosphate is required as a cofactor.

It carries out the reaction heptanedioate + ATP + CoA = 6-carboxyhexanoyl-CoA + AMP + diphosphate. The enzyme catalyses 6-carboxyhexanoyl-[ACP] + L-alanine + H(+) = (8S)-8-amino-7-oxononanoate + holo-[ACP] + CO2. Its pathway is metabolic intermediate metabolism; pimeloyl-CoA biosynthesis; pimeloyl-CoA from pimelate: step 1/1. It functions in the pathway cofactor biosynthesis; biotin biosynthesis. Functionally, catalyzes both the decarboxylative condensation of pimeloyl-[acyl-carrier protein] and L-alanine to produce 8-amino-7-oxononanoate (AON), [acyl-carrier protein], and carbon dioxide, and the transformation of pimelate into pimeloyl-CoA with concomitant hydrolysis of ATP to AMP. This chain is Biotin biosynthesis bifunctional protein BioWF, found in Cutibacterium acnes (strain DSM 16379 / KPA171202) (Propionibacterium acnes).